A 293-amino-acid polypeptide reads, in one-letter code: Methoxy mycolic acid synthase MmaA3 (293 aa).

S-adenosyl-L-methionine-binding positions include 39 to 40, 78 to 80, 100 to 105, 129 to 130, and I142; these read YS, GCG, TLSKNQ, and WA. Residue C275 is part of the active site.

It belongs to the CFA/CMAS family.

It participates in lipid metabolism; mycolic acid biosynthesis. Involved in the biosynthesis of methoxymycolic acid. It catalyzes the O-methylation of the hydroxy group of the hydroxymycolate to form a methyl ether. The chain is Methoxy mycolic acid synthase MmaA3 (cmaB) from Mycobacterium bovis (strain ATCC BAA-935 / AF2122/97).